The sequence spans 218 residues: MKTKICGLKSLREIEIVNKYAPNYVGFVFAGVKRKIDEEVASLLRRELSSEIQAVGVFVNESIERIAKMCEKNTIQLVQLHGDEDRDYINALKLEVGAPIIKAVRAQSVEQILEALTLPCDYFLYDTYSEHSYGGEGKRFDETILTEVYKESSNNEFKKYLQKPYFIAGGLTAQNVRLLDSRLEPYGVDVSSGVESMGQKDEEKVKEFLFAAWRWNEN.

The protein belongs to the TrpF family.

The catalysed reaction is N-(5-phospho-beta-D-ribosyl)anthranilate = 1-(2-carboxyphenylamino)-1-deoxy-D-ribulose 5-phosphate. It functions in the pathway amino-acid biosynthesis; L-tryptophan biosynthesis; L-tryptophan from chorismate: step 3/5. This Lachnoclostridium phytofermentans (strain ATCC 700394 / DSM 18823 / ISDg) (Clostridium phytofermentans) protein is N-(5'-phosphoribosyl)anthranilate isomerase.